We begin with the raw amino-acid sequence, 382 residues long: MTEHAIKYRLIKKEKHTGARLGEIITPHGTFPTPMFMPVGTQATVKTMSPEELKTLGSGIILSNTYHLWLRPGDELVAEAGGLHKFMNWDQPILTDSGGFQVYSLVQNKKNITEEGVKFKSHLDGRELFLNPEKAISIQNNLGSDIMMSFDECPPFYQPYDYVKASVERTSRWAERGLNAHRRPNDQGLFGIVQGAGFEDLRRQSARDLTSMDFAGYSIGGLAVGESHKEMNAVLDFTTPMLPEDKPRYLMGVGAPDSLIDGVIRGVDMFDCVLPTRIARNGTLMTHFGRVNIRNAKYEHDFTPLDPMCDCYTCTNYTRAYLRHLIKADETFGLRLCSYHNLHFLVNLMKDVRGAIMDDNLLEFREDFCERYGYNQPNAKDF.

The active-site Proton acceptor is Asp-96. Substrate is bound by residues Asp-96 to Phe-100, Asp-151, Gln-194, and Gly-221. An RNA binding region spans residues Gly-252–Ser-258. Asp-271 acts as the Nucleophile in catalysis. The RNA binding; important for wobble base 34 recognition stretch occupies residues Thr-276 to Arg-280. The Zn(2+) site is built by Cys-309, Cys-311, Cys-314, and His-340.

The protein belongs to the queuine tRNA-ribosyltransferase family. Homodimer. Within each dimer, one monomer is responsible for RNA recognition and catalysis, while the other monomer binds to the replacement base PreQ1. It depends on Zn(2+) as a cofactor.

The catalysed reaction is 7-aminomethyl-7-carbaguanine + guanosine(34) in tRNA = 7-aminomethyl-7-carbaguanosine(34) in tRNA + guanine. It participates in tRNA modification; tRNA-queuosine biosynthesis. Catalyzes the base-exchange of a guanine (G) residue with the queuine precursor 7-aminomethyl-7-deazaguanine (PreQ1) at position 34 (anticodon wobble position) in tRNAs with GU(N) anticodons (tRNA-Asp, -Asn, -His and -Tyr). Catalysis occurs through a double-displacement mechanism. The nucleophile active site attacks the C1' of nucleotide 34 to detach the guanine base from the RNA, forming a covalent enzyme-RNA intermediate. The proton acceptor active site deprotonates the incoming PreQ1, allowing a nucleophilic attack on the C1' of the ribose to form the product. After dissociation, two additional enzymatic reactions on the tRNA convert PreQ1 to queuine (Q), resulting in the hypermodified nucleoside queuosine (7-(((4,5-cis-dihydroxy-2-cyclopenten-1-yl)amino)methyl)-7-deazaguanosine). This is Queuine tRNA-ribosyltransferase from Lactococcus lactis subsp. lactis (strain IL1403) (Streptococcus lactis).